Reading from the N-terminus, the 353-residue chain is D-alanine--D-alanine ligase (353 aa).

One can recognise an ATP-grasp domain in the interval 141-349 (KAALAGAGLA…LEQLVHELLE (209 aa)). 176–231 (ESGLCYPCFIKPANLGSSVGISKARNREELIHGLRLAATLDPRLVVEQGVQARELE) is a binding site for ATP. Positions 302, 316, and 318 each coordinate Mg(2+).

The protein belongs to the D-alanine--D-alanine ligase family. It depends on Mg(2+) as a cofactor. Mn(2+) is required as a cofactor.

The protein resides in the cytoplasm. The enzyme catalyses 2 D-alanine + ATP = D-alanyl-D-alanine + ADP + phosphate + H(+). The protein operates within cell wall biogenesis; peptidoglycan biosynthesis. In terms of biological role, cell wall formation. This is D-alanine--D-alanine ligase from Parasynechococcus marenigrum (strain WH8102).